A 180-amino-acid polypeptide reads, in one-letter code: ATP synthase subunit delta (180 aa).

It belongs to the ATPase delta chain family. In terms of assembly, F-type ATPases have 2 components, F(1) - the catalytic core - and F(0) - the membrane proton channel. F(1) has five subunits: alpha(3), beta(3), gamma(1), delta(1), epsilon(1). F(0) has three main subunits: a(1), b(2) and c(10-14). The alpha and beta chains form an alternating ring which encloses part of the gamma chain. F(1) is attached to F(0) by a central stalk formed by the gamma and epsilon chains, while a peripheral stalk is formed by the delta and b chains.

It localises to the cell inner membrane. In terms of biological role, f(1)F(0) ATP synthase produces ATP from ADP in the presence of a proton or sodium gradient. F-type ATPases consist of two structural domains, F(1) containing the extramembraneous catalytic core and F(0) containing the membrane proton channel, linked together by a central stalk and a peripheral stalk. During catalysis, ATP synthesis in the catalytic domain of F(1) is coupled via a rotary mechanism of the central stalk subunits to proton translocation. Its function is as follows. This protein is part of the stalk that links CF(0) to CF(1). It either transmits conformational changes from CF(0) to CF(1) or is implicated in proton conduction. This Cupriavidus necator (strain ATCC 17699 / DSM 428 / KCTC 22496 / NCIMB 10442 / H16 / Stanier 337) (Ralstonia eutropha) protein is ATP synthase subunit delta.